The following is a 294-amino-acid chain: tRNA dimethylallyltransferase (294 aa).

10–17 (GPTAVGKT) serves as a coordination point for ATP. Substrate is bound at residue 12-17 (TAVGKT). The interval 35–38 (DSQQ) is interaction with substrate tRNA.

It belongs to the IPP transferase family. Monomer. Requires Mg(2+) as cofactor.

It carries out the reaction adenosine(37) in tRNA + dimethylallyl diphosphate = N(6)-dimethylallyladenosine(37) in tRNA + diphosphate. Functionally, catalyzes the transfer of a dimethylallyl group onto the adenine at position 37 in tRNAs that read codons beginning with uridine, leading to the formation of N6-(dimethylallyl)adenosine (i(6)A). This is tRNA dimethylallyltransferase from Streptococcus sanguinis (strain SK36).